The chain runs to 421 residues: Stemmadenine O-acetyltransferase (421 aa).

A disordered region spans residues 1 to 21 (MAPQMQILSEELIQPSSPTPQ). Residues H160 and D362 each act as proton acceptor in the active site.

The protein belongs to the plant acyltransferase family. As to quaternary structure, monomer. Expressed in leaf epidermis.

It catalyses the reaction 15alpha-stemmadenine + acetyl-CoA = O-acetyl-15alpha-stemmadenine + CoA. Its pathway is alkaloid biosynthesis. Its function is as follows. Component of iboga and aspidosperma monoterpenoid indole alkaloids (MIAs, e.g. tabersonine and catharanthine) biosynthesis pathway from 19E-geissoschizine. Acetyltransferase that catalyzes the formation of O-acetylstemmadenine from stemmadenine. This is Stemmadenine O-acetyltransferase from Catharanthus roseus (Madagascar periwinkle).